The chain runs to 287 residues: Succinate--CoA ligase [ADP-forming] subunit alpha 2 (287 aa).

Residues 17–20, Lys43, and 96–98 contribute to the CoA site; these read TGYQ and ITE. Tyr159 contacts substrate. Catalysis depends on His246, which acts as the Tele-phosphohistidine intermediate.

This sequence belongs to the succinate/malate CoA ligase alpha subunit family. As to quaternary structure, heterotetramer of two alpha and two beta subunits.

It catalyses the reaction succinate + ATP + CoA = succinyl-CoA + ADP + phosphate. The enzyme catalyses GTP + succinate + CoA = succinyl-CoA + GDP + phosphate. It participates in carbohydrate metabolism; tricarboxylic acid cycle; succinate from succinyl-CoA (ligase route): step 1/1. Succinyl-CoA synthetase functions in the citric acid cycle (TCA), coupling the hydrolysis of succinyl-CoA to the synthesis of either ATP or GTP and thus represents the only step of substrate-level phosphorylation in the TCA. The alpha subunit of the enzyme binds the substrates coenzyme A and phosphate, while succinate binding and nucleotide specificity is provided by the beta subunit. The sequence is that of Succinate--CoA ligase [ADP-forming] subunit alpha 2 from Archaeoglobus fulgidus (strain ATCC 49558 / DSM 4304 / JCM 9628 / NBRC 100126 / VC-16).